The sequence spans 503 residues: Transmembrane prolyl 4-hydroxylase (503 aa).

The disordered stretch occupies residues 1–49; sequence MAAAVATVQRPEAETVEEASNLQWPLPPEHRPSGAATRPGDSEDAPVRP. Residues 1 to 61 lie on the Cytoplasmic side of the membrane; sequence MAAAVATVQR…KPRGICSRAY (61 aa). The chain crosses the membrane as a helical; Signal-anchor for type II membrane protein span at residues 62-82; that stretch reads FLVLMVFVHLYLGNVLALLLF. Topologically, residues 83–503 are lumenal; that stretch reads VHYSNGDEST…RAYSDARVEL (421 aa). The segment at 90-110 is disordered; sequence ESTDPGPQRREQSPQPVPTLG. 2 consecutive EF-hand domains span residues 186–221 and 225–260; these read AMQVSQLDLFQLLDQNHDGRLQLREVLAQTRLGNGR and PENIQEMYSAIKADPDGDGVLSLQEFSNMDLRDFHK. Residues Asp199, Asn201, Asp203, Arg205, Glu210, Asp238, Asp240, Asp242, and Glu249 each coordinate Ca(2+). A Fe2OG dioxygenase domain is found at 310-461; that stretch reads EFSEPLQVVR…KWIANNWINV (152 aa). Fe cation-binding residues include His329 and Asp331. 2 N-linked (GlcNAc...) asparagine glycosylation sites follow: Asn349 and Asn369. Glu375 is a Fe cation binding site. Asn383 carries an N-linked (GlcNAc...) asparagine glycan. Lys452 serves as a coordination point for 2-oxoglutarate.

As to quaternary structure, homodimer. The cofactor is Fe(2+). L-ascorbate serves as cofactor. Glycosylated. Highest expression levels are detected in the eye and brain, especially in the retinal epithelium cells and cortical neurons. Also expressed in skeletal muscle, lung, heart, adrenal gland, kidney, prostate, thyroid and testis.

It localises to the endoplasmic reticulum membrane. The enzyme catalyses L-prolyl-[hypoxia-inducible factor alpha subunit] + 2-oxoglutarate + O2 = trans-4-hydroxy-L-prolyl-[hypoxia-inducible factor alpha subunit] + succinate + CO2. Catalyzes the post-translational formation of 4-hydroxyproline in hypoxia-inducible factor (HIF) alpha proteins. Hydroxylates HIF1A at 'Pro-402' and 'Pro-564'. May function as a cellular oxygen sensor and, under normoxic conditions, may target HIF through the hydroxylation for proteasomal degradation via the von Hippel-Lindau ubiquitination complex. In Mus musculus (Mouse), this protein is Transmembrane prolyl 4-hydroxylase (P4htm).